The sequence spans 138 residues: Acidic phospholipase A2 beta (138 aa).

The first 16 residues, 1–16, serve as a signal peptide directing secretion; the sequence is MRTLWIVAVLLLGVEG. 7 disulfide bridges follow: C42–C131, C44–C60, C59–C111, C65–C138, C66–C104, C73–C97, and C91–C102. Residues Y43, G45, and G47 each coordinate Ca(2+). Residue H63 is part of the active site. Residue D64 coordinates Ca(2+). The active site involves D105.

Belongs to the phospholipase A2 family. Group II subfamily. D49 sub-subfamily. In terms of assembly, dimer. Requires Ca(2+) as cofactor. As to expression, expressed by the venom gland.

It is found in the secreted. The enzyme catalyses a 1,2-diacyl-sn-glycero-3-phosphocholine + H2O = a 1-acyl-sn-glycero-3-phosphocholine + a fatty acid + H(+). PLA2 catalyzes the calcium-dependent hydrolysis of the 2-acyl groups in 3-sn-phosphoglycerides. This chain is Acidic phospholipase A2 beta, found in Crotalus adamanteus (Eastern diamondback rattlesnake).